Reading from the N-terminus, the 121-residue chain is Small ribosomal subunit protein uS11 (121 aa).

Belongs to the universal ribosomal protein uS11 family. Part of the 30S ribosomal subunit. Interacts with proteins S7 and S18. Binds to IF-3.

Functionally, located on the platform of the 30S subunit, it bridges several disparate RNA helices of the 16S rRNA. Forms part of the Shine-Dalgarno cleft in the 70S ribosome. In Mycoplasma genitalium (strain ATCC 33530 / DSM 19775 / NCTC 10195 / G37) (Mycoplasmoides genitalium), this protein is Small ribosomal subunit protein uS11.